We begin with the raw amino-acid sequence, 564 residues long: Threonine--tRNA ligase (564 aa).

The catalytic stretch occupies residues 167–464; sequence DHRSLGKQLE…LLEKTSGNFP (298 aa). Residues C260, H311, and H441 each coordinate Zn(2+).

Belongs to the class-II aminoacyl-tRNA synthetase family. In terms of assembly, homodimer. It depends on Zn(2+) as a cofactor.

The protein resides in the cytoplasm. It carries out the reaction tRNA(Thr) + L-threonine + ATP = L-threonyl-tRNA(Thr) + AMP + diphosphate + H(+). In terms of biological role, catalyzes the attachment of threonine to tRNA(Thr) in a two-step reaction: L-threonine is first activated by ATP to form Thr-AMP and then transferred to the acceptor end of tRNA(Thr). Also edits incorrectly charged L-seryl-tRNA(Thr). The protein is Threonine--tRNA ligase of Mycoplasma genitalium (strain ATCC 33530 / DSM 19775 / NCTC 10195 / G37) (Mycoplasmoides genitalium).